The primary structure comprises 731 residues: Cell death abnormality protein 12 (731 aa).

Positions 339-485 (AEVQKILDIE…VVLEQLRHVL (147 aa)) constitute an ELMO domain. One can recognise a PH domain in the interval 544–679 (VRINHLNYLK…WLEGLAELIG (136 aa)). An SH3-binding motif is present at residues 715 to 718 (PEIP).

In terms of assembly, interacts with psr-1. Forms a ternary complex with ced-2 and ced-5.

The protein localises to the cytoplasm. In terms of biological role, involved in programmed apoptosis and necrosis. Required for the cell corpse engulfment process. Has roles in the formation of actin halos and distal tip cell migration. Negatively regulates the unc-6/Netrin receptor unc-5 to control distal tip cell migration along the anterior-posterior axis of the body. Plays no role in amphid axon outgrowth. The sequence is that of Cell death abnormality protein 12 from Caenorhabditis elegans.